Reading from the N-terminus, the 100-residue chain is Large ribosomal subunit protein bL21 (100 aa).

It belongs to the bacterial ribosomal protein bL21 family. In terms of assembly, part of the 50S ribosomal subunit. Contacts protein L20.

In terms of biological role, this protein binds to 23S rRNA in the presence of protein L20. This chain is Large ribosomal subunit protein bL21, found in Ureaplasma urealyticum serovar 10 (strain ATCC 33699 / Western).